The sequence spans 336 residues: Phenylalanine--tRNA ligase alpha subunit (336 aa).

Glu263 lines the Mg(2+) pocket.

Belongs to the class-II aminoacyl-tRNA synthetase family. Phe-tRNA synthetase alpha subunit type 1 subfamily. As to quaternary structure, tetramer of two alpha and two beta subunits. Mg(2+) serves as cofactor.

The protein localises to the cytoplasm. The catalysed reaction is tRNA(Phe) + L-phenylalanine + ATP = L-phenylalanyl-tRNA(Phe) + AMP + diphosphate + H(+). The chain is Phenylalanine--tRNA ligase alpha subunit from Thermosynechococcus vestitus (strain NIES-2133 / IAM M-273 / BP-1).